Consider the following 441-residue polypeptide: UDP-N-acetylglucosamine--N-acetylmuramyl-(pentapeptide) pyrophosphoryl-undecaprenol N-acetylglucosamine transferase (441 aa).

UDP-N-acetyl-alpha-D-glucosamine contacts are provided by residues 28–30 (TGG), Asn-140, Arg-176, Ser-204, Ile-257, and Gln-302.

It belongs to the glycosyltransferase 28 family. MurG subfamily.

It is found in the cell inner membrane. The enzyme catalyses di-trans,octa-cis-undecaprenyl diphospho-N-acetyl-alpha-D-muramoyl-L-alanyl-D-glutamyl-meso-2,6-diaminopimeloyl-D-alanyl-D-alanine + UDP-N-acetyl-alpha-D-glucosamine = di-trans,octa-cis-undecaprenyl diphospho-[N-acetyl-alpha-D-glucosaminyl-(1-&gt;4)]-N-acetyl-alpha-D-muramoyl-L-alanyl-D-glutamyl-meso-2,6-diaminopimeloyl-D-alanyl-D-alanine + UDP + H(+). Its pathway is cell wall biogenesis; peptidoglycan biosynthesis. Functionally, cell wall formation. Catalyzes the transfer of a GlcNAc subunit on undecaprenyl-pyrophosphoryl-MurNAc-pentapeptide (lipid intermediate I) to form undecaprenyl-pyrophosphoryl-MurNAc-(pentapeptide)GlcNAc (lipid intermediate II). This chain is UDP-N-acetylglucosamine--N-acetylmuramyl-(pentapeptide) pyrophosphoryl-undecaprenol N-acetylglucosamine transferase, found in Xanthomonas oryzae pv. oryzae (strain KACC10331 / KXO85).